The primary structure comprises 193 residues: Potassium-transporting ATPase KdpC subunit (193 aa).

The chain crosses the membrane as a helical span at residues 9–29 (VLMTVVTTVLLGLVYPLLITG).

It belongs to the KdpC family. The system is composed of three essential subunits: KdpA, KdpB and KdpC.

Its subcellular location is the cell inner membrane. Part of the high-affinity ATP-driven potassium transport (or Kdp) system, which catalyzes the hydrolysis of ATP coupled with the electrogenic transport of potassium into the cytoplasm. This subunit acts as a catalytic chaperone that increases the ATP-binding affinity of the ATP-hydrolyzing subunit KdpB by the formation of a transient KdpB/KdpC/ATP ternary complex. This chain is Potassium-transporting ATPase KdpC subunit, found in Koribacter versatilis (strain Ellin345).